Reading from the N-terminus, the 105-residue chain is Urease subunit beta (105 aa).

The protein belongs to the urease beta subunit family. As to quaternary structure, heterotrimer of UreA (gamma), UreB (beta) and UreC (alpha) subunits. Three heterotrimers associate to form the active enzyme.

The protein localises to the cytoplasm. It catalyses the reaction urea + 2 H2O + H(+) = hydrogencarbonate + 2 NH4(+). The protein operates within nitrogen metabolism; urea degradation; CO(2) and NH(3) from urea (urease route): step 1/1. The protein is Urease subunit beta of Marinobacter nauticus (strain ATCC 700491 / DSM 11845 / VT8) (Marinobacter aquaeolei).